A 325-amino-acid polypeptide reads, in one-letter code: Biotin synthase (325 aa).

One can recognise a Radical SAM core domain in the interval 43–262 (CSVETAQLLS…VAVARLLMPR (220 aa)). [4Fe-4S] cluster-binding residues include Cys-58, Cys-62, and Cys-65. [2Fe-2S] cluster contacts are provided by Cys-102, Cys-133, Cys-193, and Arg-266.

It belongs to the radical SAM superfamily. Biotin synthase family. In terms of assembly, homodimer. Requires [4Fe-4S] cluster as cofactor. [2Fe-2S] cluster serves as cofactor.

It catalyses the reaction (4R,5S)-dethiobiotin + (sulfur carrier)-SH + 2 reduced [2Fe-2S]-[ferredoxin] + 2 S-adenosyl-L-methionine = (sulfur carrier)-H + biotin + 2 5'-deoxyadenosine + 2 L-methionine + 2 oxidized [2Fe-2S]-[ferredoxin]. It functions in the pathway cofactor biosynthesis; biotin biosynthesis; biotin from 7,8-diaminononanoate: step 2/2. Its function is as follows. Catalyzes the conversion of dethiobiotin (DTB) to biotin by the insertion of a sulfur atom into dethiobiotin via a radical-based mechanism. This chain is Biotin synthase, found in Azorhizobium caulinodans (strain ATCC 43989 / DSM 5975 / JCM 20966 / LMG 6465 / NBRC 14845 / NCIMB 13405 / ORS 571).